Consider the following 323-residue polypeptide: Ferrochelatase (323 aa).

Residues H196 and E277 each contribute to the Fe cation site.

This sequence belongs to the ferrochelatase family.

The protein resides in the cytoplasm. The catalysed reaction is heme b + 2 H(+) = protoporphyrin IX + Fe(2+). The protein operates within porphyrin-containing compound metabolism; protoheme biosynthesis; protoheme from protoporphyrin-IX: step 1/1. In terms of biological role, catalyzes the ferrous insertion into protoporphyrin IX. The chain is Ferrochelatase from Haemophilus influenzae (strain ATCC 51907 / DSM 11121 / KW20 / Rd).